The primary structure comprises 282 residues: N-acetylaspartate synthetase (282 aa).

A helical transmembrane segment spans residues 103-125 (FLTVMCYVMTKSFTLTFCAPFIL). An N-acetyltransferase domain is found at 110 to 269 (VMTKSFTLTF…RSPLERLFFQ (160 aa)).

This sequence belongs to the NAT8 family.

The protein localises to the cytoplasm. Its subcellular location is the microsome membrane. It is found in the mitochondrion membrane. The protein resides in the endoplasmic reticulum membrane. It carries out the reaction L-aspartate + acetyl-CoA = N-acetyl-L-aspartate + CoA + H(+). In terms of biological role, catalyzes the synthesis of N-acetylaspartate acid (NAA) from L-aspartate and acetyl-CoA. This Danio rerio (Zebrafish) protein is N-acetylaspartate synthetase (nat8l).